The primary structure comprises 382 residues: Cell division protein FtsZ (382 aa).

GTP contacts are provided by residues 21–25 (GGGNN), 108–110 (GTG), E139, R143, and D187. The segment at 320–382 (KDVTKPQRPS…TFLRNRNKRG (63 aa)) is disordered. Residues 326-341 (QRPSLNQSIKTHNQSV) are compositionally biased toward polar residues. Basic and acidic residues predominate over residues 342 to 351 (PKREPKREEP). Over residues 352–365 (QQQNTVSRHTSQPA) the composition is skewed to polar residues.

This sequence belongs to the FtsZ family. Homodimer. Polymerizes to form a dynamic ring structure in a strictly GTP-dependent manner. Interacts directly with several other division proteins. Interacts with FtsA. Interacts with Phi29 DNA replication protein 1. Interacts with the cell division inhibitor MciZ.

It is found in the cytoplasm. During sporulation, is negatively regulated by MciZ, which binds to FtsZ and inhibits its polymerization and the formation of the Z ring. In terms of biological role, essential cell division protein that forms a contractile ring structure (Z ring) at the future cell division site. The regulation of the ring assembly controls the timing and the location of cell division. One of the functions of the FtsZ ring is to recruit other cell division proteins to the septum to produce a new cell wall between the dividing cells. Binds GTP and shows GTPase activity. This chain is Cell division protein FtsZ, found in Bacillus subtilis (strain 168).